The sequence spans 461 residues: Polycomb group protein FIE1 (461 aa).

Positions 1 to 11 (MPPSKARRKRS) are enriched in basic residues. Positions 1-56 (MPPSKARRKRSLRDITATVATGTVANSKPGSSSTNEGKQQDKKKEGPQEPDIPPLP) are disordered. The span at 18-37 (TVATGTVANSKPGSSSTNEG) shows a compositional bias: polar residues. Residues 38 to 47 (KQQDKKKEGP) are compositionally biased toward basic and acidic residues. WD repeat units lie at residues 143 to 186 (DKDE…LDKS), 189 to 229 (GHGG…CILV), 235 to 275 (GHRH…IYVE), 301 to 338 (VHSD…RRPG), 351 to 391 (PKCS…PVLI), and 398 to 437 (ECKS…ASSS). The tract at residues 429–461 (EVDPAASSSKPDQAAAPAAGVGAGAGADADADA) is disordered. The segment covering 432-448 (PAASSSKPDQAAAPAAG) has biased composition (low complexity).

The protein belongs to the WD repeat ESC family. Specifically expressed in kernel starting from 6 days after pollination.

It localises to the nucleus. Polycomb group (PcG) protein. PcG proteins act by forming multiprotein complexes, which are required to maintain the transcriptionally repressive state of homeotic genes throughout development. PcG proteins are not required to initiate repression, but to maintain it during later stages of development. They probably act via the methylation of histones, rendering chromatin heritably changed in its expressibility. This is Polycomb group protein FIE1 (FIE1) from Zea mays (Maize).